Here is a 74-residue protein sequence, read N- to C-terminus: Large ribosomal subunit protein bL31 (74 aa).

Belongs to the bacterial ribosomal protein bL31 family. Type A subfamily. Part of the 50S ribosomal subunit.

Its function is as follows. Binds the 23S rRNA. The sequence is that of Large ribosomal subunit protein bL31 from Chlorobaculum parvum (strain DSM 263 / NCIMB 8327) (Chlorobium vibrioforme subsp. thiosulfatophilum).